We begin with the raw amino-acid sequence, 229 residues long: MFEKLQDVLCYRFADVRLLETALTHSSYANERGTEIEHNERLEYLGDAVLELTVSEQLFTRFPEAREGQLTRMRARLVSKPSLAELARELKLDTYLLLGKGEESQGGRTRSSVLSDAFEAILGAIFLDGGYAAAGKTVLHVFSSRWPQGAEAARTKDAKSTLQELTQRLFKERPVYTLLGSSGPEHEKIFKVRLLLPDGRALETEGQSVKRAEQKAAGLALELLEGESA.

Residues 2–130 (FEKLQDVLCY…ILGAIFLDGG (129 aa)) enclose the RNase III domain. E43 lines the Mg(2+) pocket. The active site involves D47. The Mg(2+) site is built by D116 and E119. E119 is an active-site residue. In terms of domain architecture, DRBM spans 157–226 (DAKSTLQELT…AGLALELLEG (70 aa)).

Belongs to the ribonuclease III family. In terms of assembly, homodimer. Requires Mg(2+) as cofactor.

It is found in the cytoplasm. The catalysed reaction is Endonucleolytic cleavage to 5'-phosphomonoester.. Functionally, digests double-stranded RNA. Involved in the processing of primary rRNA transcript to yield the immediate precursors to the large and small rRNAs (23S and 16S). Processes some mRNAs, and tRNAs when they are encoded in the rRNA operon. Processes pre-crRNA and tracrRNA of type II CRISPR loci if present in the organism. The protein is Ribonuclease 3 of Oleidesulfovibrio alaskensis (strain ATCC BAA-1058 / DSM 17464 / G20) (Desulfovibrio alaskensis).